The primary structure comprises 45 residues: GKCADAWKSCDNLPCCVVNGYSRTCMCSANRCNCEETKKLREHFG.

Intrachain disulfides connect Cys3-Cys16, Cys10-Cys25, Cys15-Cys34, and Cys27-Cys32.

As to expression, expressed by the venom gland.

It localises to the secreted. In terms of biological role, neurotoxin. Causes rapid general flaccid paralysis and death in mice at dose levels of 5 ug per mouse. The protein is U1-ctenitoxin-Pk1a of Phoneutria keyserlingi (Brazilian wandering spider).